The following is a 1404-amino-acid chain: Proteoglycan 4 (1404 aa).

Residues 1–24 form the signal peptide; it reads MAWKTLPIYLLLLLSVFVIQQVSS. 2 consecutive SMB domains span residues 26-69 and 66-108; these read DLSS…AELS and AELS…AEVH. 14 disulfides stabilise this stretch: Cys30-Cys34, Cys30-Cys46, Cys34-Cys64, Cys44-Cys46, Cys44-Cys57, Cys50-Cys56, Cys57-Cys64, Cys70-Cys74, Cys70-Cys86, Cys74-Cys104, Cys84-Cys86, Cys84-Cys97, Cys90-Cys96, and Cys97-Cys104. The tract at residues 111–966 is disordered; it reads TSPPSSKKAP…TTQVTSTTTQ (856 aa). O-linked (GalNAc...) serine glycans are attached at residues Ser123 and Ser136. Positions 132-146 are enriched in basic residues; the sequence is TTKRSPKPPNKKKTK. A compositionally biased stretch (low complexity) spans 166–177; the sequence is SSSSSSSSSSSS. The span at 193 to 205 shows a compositional bias: basic and acidic residues; the sequence is ELQKKLKVKDNKK. Asn206 carries an N-linked (GlcNAc...) asparagine glycan. Residues 235-252 show a composition bias toward polar residues; it reads TPDTSTTQHNKVSTSPKI. Thr240 and Thr253 each carry an O-linked (GalNAc...) threonine glycan. Residues 266-276 show a composition bias toward polar residues; the sequence is PNSDTSKETSL. Residues Thr277, Thr291, and Thr305 are each glycosylated (O-linked (GalNAc...) threonine). The O-linked (GalNAc...) serine glycan is linked to Ser306. A glycan (O-linked (GalNAc...) threonine) is linked at Thr310. An O-linked (GalNAc...) serine glycan is attached at Ser317. 3 O-linked (GalNAc...) threonine glycosylation sites follow: Thr324, Thr332, and Thr338. Composition is skewed to low complexity over residues 329–348 and 356–405; these read AKPTPKAETTTKGPALTTPK and KEPA…KEPA. Copy 1 of the repeat occupies 348-355; it reads KEPTPTTP. A 59 X 8 AA repeats of K-X-P-X-P-T-T-X region spans residues 348–855; that stretch reads KEPTPTTPKE…TPETPPPTTS (508 aa). The 2; approximate repeat unit spans residues 356 to 363; it reads KEPASTTP. Residues 364–371 form repeat 3; the sequence is KEPTPTTI. Thr367 carries an O-linked (GalNAc...) threonine glycan. Residues 372–378 form a 4; approximate repeat; the sequence is KSAPTTP. Ser373 carries an O-linked (GalNAc...) serine glycan. Residues Thr376, Thr384, and Thr385 are each glycosylated (O-linked (GalNAc...) threonine). Repeat unit 5 spans residues 379–386; it reads KEPAPTTT. A 6; approximate repeat occupies 387–393; that stretch reads KSAPTTP. Ser388 is a glycosylation site (O-linked (GalNAc...) serine). Thr391, Thr399, Thr400, Thr407, Thr408, Thr415, and Thr423 each carry an O-linked (GalNAc...) threonine glycan. A run of 4 repeats spans residues 394–401, 402–409, 410–417, and 418–425. Residues 413-431 show a composition bias toward low complexity; sequence APTTTKEPAPTTTKSAPTT. Residues 426-432 form an 11; approximate repeat; the sequence is KSAPTTP. Ser427 carries an O-linked (GalNAc...) serine glycan. 7 O-linked (GalNAc...) threonine glycosylation sites follow: Thr430, Thr438, Thr439, Thr446, Thr447, Thr454, and Thr455. Pro residues-rich tracts occupy residues 432–467 and 476–506; these read PKEPAPTTPKKPAPTTPKEPAPTTPKEPTPTTPKEP and PTTPKEPAPTAPKKPAPTTPKEPAPTTPKEP. A run of 4 repeats spans residues 433 to 440, 441 to 448, 449 to 456, and 457 to 464. The 16; approximate repeat unit spans residues 465-471; that stretch reads KEPAPTT. Residues 472–479 form repeat 17; sequence KEPAPTTP. 8 O-linked (GalNAc...) threonine glycosylation sites follow: Thr477, Thr478, Thr485, Thr493, Thr494, Thr501, Thr502, and Thr509. One copy of the 18; approximate repeat lies at 480-487; that stretch reads KEPAPTAP. Residues 488–495 form a 19; approximate repeat; that stretch reads KKPAPTTP. 4 consecutive repeat copies span residues 496-503, 504-511, 512-519, and 520-527. Residues 523-561 are compositionally biased toward low complexity; sequence APTTTKSAPTTTKEPAPTTTKSAPTTPKEPSPTTTKEPA. The O-linked (GalNAc...) threonine glycan is linked to Thr525. The 24; approximate repeat unit spans residues 528–534; the sequence is KSAPTTT. The O-linked (GalNAc...) serine glycan is linked to Ser529. 3 O-linked (GalNAc...) threonine glycosylation sites follow: Thr532, Thr540, and Thr541. Repeat unit 25 spans residues 535-542; that stretch reads KEPAPTTT. Residues 543-549 form a 26; approximate repeat; the sequence is KSAPTTP. A run of 6 repeats spans residues 550–557, 558–565, 566–573, 574–581, 582–589, and 590–597. An O-linked (GalNAc...) serine glycan is attached at Ser553. 17 O-linked (GalNAc...) threonine glycosylation sites follow: Thr555, Thr563, Thr564, Thr571, Thr572, Thr579, Thr580, Thr587, Thr588, Thr595, Thr603, Thr604, Thr611, Thr612, Thr616, Thr619, and Thr627. Residues 562 to 592 show a composition bias toward pro residues; that stretch reads PTTPKEPAPTTPKKPAPTTPKEPAPTTPKEP. One copy of the 33; approximate repeat lies at 598–605; sequence KKPAPTTP. The span at 602–611 shows a compositional bias: pro residues; it reads PTTPKEPAPT. The stretch at 606–613 is repeat 34; that stretch reads KEPAPTTP. Residues 612–636 show a composition bias toward low complexity; the sequence is TPKETAPTTPKKLTPTTPEKLAPTT. The 35; approximate repeat unit spans residues 614–621; that stretch reads KETAPTTP. One copy of the 36; approximate repeat lies at 622–629; sequence KKLTPTTP. The 37; approximate repeat unit spans residues 638 to 645; the sequence is EKPAPTTP. Residues 653–667 are compositionally biased toward pro residues; that stretch reads PEEPTPTTPEEPAPT. A 38; approximate repeat occupies 662–669; the sequence is EEPAPTTP. Thr676, Thr683, Thr684, Thr691, Thr692, Thr699, Thr700, Thr704, and Thr707 each carry an O-linked (GalNAc...) threonine glycan. Over residues 677 to 699 the composition is skewed to pro residues; it reads PKEPAPTTPKEPAPTTPKEPAPT. 3 tandem repeats follow at residues 678 to 685, 686 to 693, and 694 to 701. A compositionally biased stretch (low complexity) spans 700–721; sequence TPKETAPTTPKGTAPTTLKEPA. One copy of the 42; approximate repeat lies at 702–709; that stretch reads KETAPTTP. The stretch at 710-717 is one 43; approximate repeat; that stretch reads KGTAPTTL. Repeat unit 44 spans residues 718 to 725; that stretch reads KEPAPTTP. 3 O-linked (GalNAc...) threonine glycosylation sites follow: Thr723, Thr724, and Thr736. Residues 728–761 show a composition bias toward low complexity; sequence PAPKELAPTTTKEPTSTTSDKPAPTTPKGTAPTT. Residues 731-738 form a 45; approximate repeat; that stretch reads KELAPTTT. One copy of the 46; approximate repeat lies at 739-746; that stretch reads KEPTSTTS. Residues 747–754 form a 47; approximate repeat; that stretch reads DKPAPTTP. One copy of the 48; approximate repeat lies at 755–762; it reads KGTAPTTP. Positions 762-776 are enriched in pro residues; it reads PKEPAPTTPKEPAPT. Tandem repeats lie at residues 763–770 and 771–778. 4 O-linked (GalNAc...) threonine glycosylation sites follow: Thr768, Thr769, Thr776, and Thr777. Over residues 777–790 the composition is skewed to low complexity; it reads TPKGTAPTTLKEPA. The 51; approximate repeat unit spans residues 779-786; the sequence is KGTAPTTL. Copy 52 of the repeat occupies 787–794; the sequence is KEPAPTTP. O-linked (GalNAc...) threonine glycosylation is found at Thr792, Thr793, and Thr805. Residues 797 to 830 show a composition bias toward low complexity; sequence PAPKELAPTTTKGPTSTTSDKPAPTTPKETAPTT. Residues 800-807 form a 53; approximate repeat; it reads KELAPTTT. The stretch at 808-815 is one 54; approximate repeat; that stretch reads KGPTSTTS. The O-linked (GalNAc...) serine glycan is linked to Ser812. Residues 816 to 823 form a 55; approximate repeat; sequence DKPAPTTP. The 56; approximate repeat unit spans residues 824-831; it reads KETAPTTP. O-linked (GalNAc...) threonine glycans are attached at residues Thr829, Thr837, and Thr838. Over residues 831–853 the composition is skewed to pro residues; that stretch reads PKEPAPTTPKKPAPTTPETPPPT. 2 tandem repeats follow at residues 832-839 and 840-847. A 59; approximate repeat occupies 848-855; it reads ETPPPTTS. The segment covering 854–866 has biased composition (low complexity); sequence TSEVSTPTTTKEP. An O-linked (GalNAc...) serine glycan is attached at Ser892. Over residues 899–914 the composition is skewed to low complexity; sequence PTTKTPAATKPEMTTT. Thr900 is a glycosylation site (O-linked (GalNAc...) threonine). The segment covering 915-926 has biased composition (basic and acidic residues); sequence AKDKTTERDLRT. Over residues 927–966 the composition is skewed to low complexity; that stretch reads TPETTTAAPKMTKETATTTEKTTESKITATTTQVTSTTTQ. O-linked (GalNAc...) threonine glycans are attached at residues Thr930 and Thr931. O-linked (GalNAc...) serine glycosylation occurs at Ser962. Residues Thr963, Thr968, Thr975, Thr978, Thr979, and Thr980 are each glycosylated (O-linked (GalNAc...) threonine). The segment at 992 to 1104 is disordered; that stretch reads ITTTEIMNKP…EDAGGAEGET (113 aa). Positions 999–1012 are enriched in basic and acidic residues; the sequence is NKPEETAKPKDRAT. The span at 1026–1047 shows a compositional bias: basic residues; it reads KAPKKPTSTKKPKTMPRVRKPK. Thr1039 carries O-linked (GalNAc...) threonine glycosylation. Residues 1048–1060 show a composition bias toward low complexity; the sequence is TTPTPRKMTSTMP. A compositionally biased stretch (polar residues) spans 1073 to 1085; the sequence is LQTTTRPNQTPNS. Cys1146 and Cys1403 are joined by a disulfide. Hemopexin repeat units lie at residues 1148–1191 and 1192–1239; these read GKPV…VWGI and PSPI…FGGL. Asn1159 carries N-linked (GlcNAc...) asparagine glycosylation. A glycan (O-linked (GalNAc...) threonine) is linked at Thr1161.

In terms of assembly, homodimer; disulfide-linked. N-glycosylated. In terms of processing, O-glycosylated; contains glycosaminoglycan chondroitin sulfate and keratan sulfate. O-glycosylated with sialylated oligosaccharides which are predominantly represented by the monosialylated core type I structure, NeuNAcalpha2-3Galbeta1-3GalNAc, with smaller amounts of disialylated O-glycans. Post-translationally, the disulfide bond between Cys-1146 and Cys-1403 is essential for protein cleavage. Proteolytically cleaved by cathepsin CTSG. As to expression, highly expressed in synovial tissue, cartilage and liver and weakly in heart and lung. Isoform B is expressed in kidney, lung, liver, heart and brain. Isoform C and isoform D are widely expressed.

Its subcellular location is the secreted. Its function is as follows. Plays a role in boundary lubrication within articulating joints. Prevents protein deposition onto cartilage from synovial fluid by controlling adhesion-dependent synovial growth and inhibiting the adhesion of synovial cells to the cartilage surface. In terms of biological role, isoform F plays a role as a growth factor acting on the primitive cells of both hematopoietic and endothelial cell lineages. In Homo sapiens (Human), this protein is Proteoglycan 4 (PRG4).